The sequence spans 482 residues: tRNA sulfurtransferase (482 aa).

Residues 61–165 (PVIADALTRI…NDKLMLVKAR (105 aa)) enclose the THUMP domain. ATP-binding positions include 183 to 184 (LI), Lys-265, Gly-287, and Gln-296. Cys-344 and Cys-456 are joined by a disulfide. Positions 404–482 (FDADQVILDI…GFTNVKVYRP (79 aa)) constitute a Rhodanese domain. Residue Cys-456 is the Cysteine persulfide intermediate of the active site.

The protein belongs to the ThiI family.

It localises to the cytoplasm. The catalysed reaction is [ThiI sulfur-carrier protein]-S-sulfanyl-L-cysteine + a uridine in tRNA + 2 reduced [2Fe-2S]-[ferredoxin] + ATP + H(+) = [ThiI sulfur-carrier protein]-L-cysteine + a 4-thiouridine in tRNA + 2 oxidized [2Fe-2S]-[ferredoxin] + AMP + diphosphate. It carries out the reaction [ThiS sulfur-carrier protein]-C-terminal Gly-Gly-AMP + S-sulfanyl-L-cysteinyl-[cysteine desulfurase] + AH2 = [ThiS sulfur-carrier protein]-C-terminal-Gly-aminoethanethioate + L-cysteinyl-[cysteine desulfurase] + A + AMP + 2 H(+). Its pathway is cofactor biosynthesis; thiamine diphosphate biosynthesis. Catalyzes the ATP-dependent transfer of a sulfur to tRNA to produce 4-thiouridine in position 8 of tRNAs, which functions as a near-UV photosensor. Also catalyzes the transfer of sulfur to the sulfur carrier protein ThiS, forming ThiS-thiocarboxylate. This is a step in the synthesis of thiazole, in the thiamine biosynthesis pathway. The sulfur is donated as persulfide by IscS. In Serratia proteamaculans (strain 568), this protein is tRNA sulfurtransferase.